We begin with the raw amino-acid sequence, 249 residues long: MKYLIVNADDFGLTKGVNKGVVECYKNGILRSTSIMCNMPYANEALQVKELCPDLGFGIHITLDAGKPLSSPEKVNTLVDERGYFKRGFPHSLDDADVDQIRIEIEEQIKKAFSLGVTITHMDSHHHAQSHSKVIDAFIEMAHKYNLPVRSTPLDKEKIIKAGLKTVDNFIYTFYDDGVKKENLLSILGSLEEGTTEIMSHPAYVDDELVNISSYHAKREVERKILTDKDVLQFIRDNNILLTNYSILK.

Residues H60 and H125 each contribute to the Mg(2+) site.

This sequence belongs to the YdjC deacetylase family. As to quaternary structure, homodimer. Mg(2+) is required as a cofactor.

In terms of biological role, probably catalyzes the deacetylation of acetylated carbohydrates an important step in the degradation of oligosaccharides. The protein is Carbohydrate deacetylase of Thermoanaerobacter pseudethanolicus (strain ATCC 33223 / 39E) (Clostridium thermohydrosulfuricum).